A 703-amino-acid chain; its full sequence is Subtilisin-like protease SBT4.7 (703 aa).

A signal peptide spans M1–A19. The propeptide at V20 to Q107 is activation peptide. The Inhibitor I9 domain maps to V29–L106. A Peptidase S8 domain is found at S111–I556. The Charge relay system role is filled by D139. Residue N170 is glycosylated (N-linked (GlcNAc...) asparagine). H194 serves as the catalytic Charge relay system. N-linked (GlcNAc...) asparagine glycosylation is found at N217, N360, N416, and N433. A PA domain is found at K350–L411. The active-site Charge relay system is S495. Residues N577, N615, and N633 are each glycosylated (N-linked (GlcNAc...) asparagine).

The protein belongs to the peptidase S8 family. The C-terminal propeptide is autocleaved.

Its subcellular location is the secreted. This Arabidopsis thaliana (Mouse-ear cress) protein is Subtilisin-like protease SBT4.7.